We begin with the raw amino-acid sequence, 215 residues long: MSKAIVLDSHLKEKGSVELPKRYESINSHNLYLYVKHYLSSARANTAKSKNRAEVSGGGRKPWAQKGGGRARAGSITSPVFVGGGVSHGATNNRNYNLKINKKQKRLALEYALEEKAQANKLFVVEKIAIKGVVEDNKRKHLTKEANQMFQALEQRDTLFVCMNMDEYTELAFSNLKKCLIVDVSELNAYLLAAFSSVVMEEAAFQHVVQDKTEE.

Residues 46–72 form a disordered region; the sequence is TAKSKNRAEVSGGGRKPWAQKGGGRAR. The segment covering 56-71 has biased composition (gly residues); it reads SGGGRKPWAQKGGGRA.

It belongs to the universal ribosomal protein uL4 family. Part of the 50S ribosomal subunit.

Its function is as follows. One of the primary rRNA binding proteins, this protein initially binds near the 5'-end of the 23S rRNA. It is important during the early stages of 50S assembly. It makes multiple contacts with different domains of the 23S rRNA in the assembled 50S subunit and ribosome. Forms part of the polypeptide exit tunnel. This chain is Large ribosomal subunit protein uL4, found in Helicobacter pylori (strain ATCC 700392 / 26695) (Campylobacter pylori).